The chain runs to 302 residues: Aquaporin NIP3-1 (302 aa).

The interval 1–31 (MEPGSTPPNGSAPATPGTPAPLFSSGGPRVD) is disordered. The span at 7–21 (PPNGSAPATPGTPAP) shows a compositional bias: low complexity. A run of 2 helical transmembrane segments spans residues 76–96 (LGAEFVGTFILIFFATAAPIV) and 102–122 (GAISPFGNAACAGLAVATVIL). The NPA 1 signature appears at 133-135 (NPS). Transmembrane regions (helical) follow at residues 149–169 (LQVPAYVAVQALASVCAAFAL), 193–213 (AFFTEFIISFNLLFVVTAVAT), and 217–237 (AVGELAGIAVGAAVTLNILVA). The NPA 2 signature appears at 246 to 248 (NPV). The chain crosses the membrane as a helical span at residues 264 to 284 (WIYLLAPTLGALAGASVYKAV).

The protein belongs to the MIP/aquaporin (TC 1.A.8) family. NIP (TC 1.A.8.12) subfamily.

Its subcellular location is the membrane. Functionally, aquaporins facilitate the transport of water and small neutral solutes across cell membranes. This is Aquaporin NIP3-1 (NIP3-1) from Zea mays (Maize).